A 299-amino-acid polypeptide reads, in one-letter code: Dermonecrotic toxin LiSicTox-alphaIVA1 (299 aa).

The first 18 residues, 1–18 (MLFPTALIFGCWALVIEG), serve as a signal peptide directing secretion. Histidine 30 is a catalytic residue. Residues glutamate 50 and aspartate 52 each contribute to the Mg(2+) site. The active-site Nucleophile is the histidine 66. Intrachain disulfides connect cysteine 70-cysteine 76 and cysteine 72-cysteine 217. A Mg(2+)-binding site is contributed by aspartate 110.

Belongs to the arthropod phospholipase D family. Class II subfamily. Class IIa sub-subfamily. The cofactor is Mg(2+). In terms of tissue distribution, expressed by the venom gland.

It localises to the secreted. It carries out the reaction an N-(acyl)-sphingosylphosphocholine = an N-(acyl)-sphingosyl-1,3-cyclic phosphate + choline. The catalysed reaction is an N-(acyl)-sphingosylphosphoethanolamine = an N-(acyl)-sphingosyl-1,3-cyclic phosphate + ethanolamine. It catalyses the reaction a 1-acyl-sn-glycero-3-phosphocholine = a 1-acyl-sn-glycero-2,3-cyclic phosphate + choline. The enzyme catalyses a 1-acyl-sn-glycero-3-phosphoethanolamine = a 1-acyl-sn-glycero-2,3-cyclic phosphate + ethanolamine. In terms of biological role, dermonecrotic toxins cleave the phosphodiester linkage between the phosphate and headgroup of certain phospholipids (sphingolipid and lysolipid substrates), forming an alcohol (often choline) and a cyclic phosphate. This toxin acts on sphingomyelin (SM) with high activity. It may also act on ceramide phosphoethanolamine (CPE), lysophosphatidylcholine (LPC) and lysophosphatidylethanolamine (LPE), but not on lysophosphatidylserine (LPS), and lysophosphatidylglycerol (LPG). It acts by transphosphatidylation, releasing exclusively cyclic phosphate products as second products. Has hemolytic activity in human erythrocytes in a dose-dependent manner. In vivo, this toxin induces dermonecrosis, edema, hemorrhage, massive inflammatory response, as well as vascular permeability. In addition, thrombus formation has also been detected in dermal blood vessels. It also induces platelet aggregation. It is noteworthy that a Glu-248 replaces the Asp present in paralogs, without decrease in catalytic and hemolytic activities. The chain is Dermonecrotic toxin LiSicTox-alphaIVA1 from Loxosceles intermedia (Brown spider).